Reading from the N-terminus, the 367-residue chain is tRNA/tmRNA (uracil-C(5))-methyltransferase (367 aa).

S-adenosyl-L-methionine-binding residues include Q190, Y218, N223, E239, and D299. Catalysis depends on C324, which acts as the Nucleophile. Residue E358 is the Proton acceptor of the active site.

It belongs to the class I-like SAM-binding methyltransferase superfamily. RNA M5U methyltransferase family. TrmA subfamily.

The enzyme catalyses uridine(54) in tRNA + S-adenosyl-L-methionine = 5-methyluridine(54) in tRNA + S-adenosyl-L-homocysteine + H(+). It catalyses the reaction uridine(341) in tmRNA + S-adenosyl-L-methionine = 5-methyluridine(341) in tmRNA + S-adenosyl-L-homocysteine + H(+). Its function is as follows. Dual-specificity methyltransferase that catalyzes the formation of 5-methyluridine at position 54 (m5U54) in all tRNAs, and that of position 341 (m5U341) in tmRNA (transfer-mRNA). The chain is tRNA/tmRNA (uracil-C(5))-methyltransferase from Pectobacterium atrosepticum (strain SCRI 1043 / ATCC BAA-672) (Erwinia carotovora subsp. atroseptica).